Consider the following 815-residue polypeptide: Ubiquitin carboxyl-terminal hydrolase 16 (815 aa).

A disordered region spans residues 1 to 27; that stretch reads MGKKKVKDRSAGTDSSSETAGPSCTHI. Over residues 12–22 the composition is skewed to polar residues; it reads GTDSSSETAGP. The UBP-type zinc finger occupies 22–143; that stretch reads PSCTHIRKGT…QLITNIRKQV (122 aa). Residues Cys-24, His-26, Cys-48, Cys-51, Cys-76, Cys-79, Cys-84, His-91, His-95, His-104, Cys-117, and Cys-120 each coordinate Zn(2+). The segment covering 148–161 has biased composition (basic and acidic residues); sequence DKRNASKKSWKEDI. The interval 148–200 is disordered; that stretch reads DKRNASKKSWKEDISVMNSAEQTQDEEKGKKGKQKSSSKQEDSPKSHQSAAAG. One can recognise a USP domain in the interval 208–814; it reads RGLSNLGNTC…QAYLLFYEKI (607 aa). The Nucleophile role is filled by Cys-217. Composition is skewed to basic residues over residues 411–420 and 449–468; these read NQKKAVQHRH and QQKK…RRQQ. The tract at residues 411-510 is disordered; the sequence is NQKKAVQHRH…GSADAQPADT (100 aa). Residues 478 to 510 show a composition bias toward polar residues; that stretch reads AITNQSSTDPADSSMQTQTVSVNGSADAQPADT. The Proton acceptor role is filled by His-752.

This sequence belongs to the peptidase C19 family. USP16 subfamily. Homotetramer.

The protein localises to the nucleus. The catalysed reaction is Thiol-dependent hydrolysis of ester, thioester, amide, peptide and isopeptide bonds formed by the C-terminal Gly of ubiquitin (a 76-residue protein attached to proteins as an intracellular targeting signal).. In terms of biological role, specifically deubiquitinates 'Lys-120' of histone H2A (H2AK119Ub), a specific tag for epigenetic transcriptional repression, thereby acting as a coactivator. Deubiquitination of histone H2A is a prerequisite for subsequent phosphorylation at 'Ser-11' of histone H3 (H3S10ph), and is required for chromosome segregation when cells enter into mitosis. Regulates Hox gene expression via histone H2A deubiquitination. Prefers nucleosomal substrates. Does not deubiquitinate histone H2B. The polypeptide is Ubiquitin carboxyl-terminal hydrolase 16 (usp16) (Danio rerio (Zebrafish)).